Reading from the N-terminus, the 513-residue chain is 2-isopropylmalate synthase (513 aa).

The Pyruvate carboxyltransferase domain occupies 4-266 (IEFFDTSLRD…QSPLKLSETA (263 aa)). Asp-13, His-201, His-203, and Asn-237 together coordinate Mn(2+). The tract at residues 390-513 (ILDNVQIDGH…VEQISAHDGI (124 aa)) is regulatory domain.

Belongs to the alpha-IPM synthase/homocitrate synthase family. LeuA type 1 subfamily. Homodimer. Requires Mn(2+) as cofactor.

The protein localises to the cytoplasm. It catalyses the reaction 3-methyl-2-oxobutanoate + acetyl-CoA + H2O = (2S)-2-isopropylmalate + CoA + H(+). The protein operates within amino-acid biosynthesis; L-leucine biosynthesis; L-leucine from 3-methyl-2-oxobutanoate: step 1/4. Catalyzes the condensation of the acetyl group of acetyl-CoA with 3-methyl-2-oxobutanoate (2-ketoisovalerate) to form 3-carboxy-3-hydroxy-4-methylpentanoate (2-isopropylmalate). In Lactococcus lactis subsp. lactis (strain IL1403) (Streptococcus lactis), this protein is 2-isopropylmalate synthase.